The sequence spans 144 residues: Prefoldin subunit alpha (144 aa).

It belongs to the prefoldin alpha subunit family. In terms of assembly, heterohexamer of two alpha and four beta subunits.

Its subcellular location is the cytoplasm. In terms of biological role, molecular chaperone capable of stabilizing a range of proteins. Seems to fulfill an ATP-independent, HSP70-like function in archaeal de novo protein folding. The sequence is that of Prefoldin subunit alpha from Methanococcus aeolicus (strain ATCC BAA-1280 / DSM 17508 / OCM 812 / Nankai-3).